We begin with the raw amino-acid sequence, 408 residues long: Peptidase T (408 aa).

A Zn(2+)-binding site is contributed by His-78. Asp-80 is an active-site residue. Asp-141 contributes to the Zn(2+) binding site. Residue Glu-175 is the Proton acceptor of the active site. Glu-176, Asp-198, and His-380 together coordinate Zn(2+).

Belongs to the peptidase M20B family. The cofactor is Zn(2+).

Its subcellular location is the cytoplasm. It carries out the reaction Release of the N-terminal residue from a tripeptide.. Cleaves the N-terminal amino acid of tripeptides. This chain is Peptidase T, found in Clostridium botulinum (strain Loch Maree / Type A3).